The sequence spans 496 residues: Cytochrome P450 71D18 (496 aa).

A helical; Signal-anchor for type II membrane protein membrane pass occupies residues 2-22 (ELDLLSAIIILVATYIVSLLI). Cysteine 436 lines the heme pocket.

This sequence belongs to the cytochrome P450 family. The cofactor is heme.

Its subcellular location is the endoplasmic reticulum membrane. The catalysed reaction is (4S)-limonene + reduced [NADPH--hemoprotein reductase] + O2 = (1S,5R)-carveol + oxidized [NADPH--hemoprotein reductase] + H2O + H(+). Hydroxylates (-)-(4S)-limonene to (-)-trans-carveol, a precursor of (-)-carvone. Fluorinated substrate analogs are hydroxylated with the same regio- and stereochemistry. This chain is Cytochrome P450 71D18 (CYP71D18), found in Mentha gracilis (Gingermint).